The sequence spans 81 residues: Prophage excisionase-like protein (81 aa).

This sequence to lambdoid phages excisionases.

This chain is Prophage excisionase-like protein (xisE), found in Escherichia coli (strain K12).